A 391-amino-acid polypeptide reads, in one-letter code: Adhesion defective protein 1 (391 aa).

Positions 180–190 (SQSRPPQNQIQ) are enriched in polar residues. 2 disordered regions span residues 180 to 217 (SQSR…PDSP) and 366 to 391 (VEGE…RTKV). A compositionally biased stretch (low complexity) spans 201–211 (SESVNINSSSS). Polar residues predominate over residues 370 to 383 (NPNNNPNFYSSDML).

The protein belongs to the adn1/SEU family.

The protein localises to the nucleus. Probable transcriptional regulator involved in cell adhesion. This chain is Adhesion defective protein 1 (adn1), found in Schizosaccharomyces pombe (strain 972 / ATCC 24843) (Fission yeast).